We begin with the raw amino-acid sequence, 80 residues long: Phage shock protein G (80 aa).

The next 2 membrane-spanning stretches (helical) occupy residues 5–25 and 41–61; these read LFVIGFFVMLMVTGVSLLGII and LALMIKLLPWLLLAIAVVWVI.

The protein localises to the cell inner membrane. Functionally, effector of the phage shock response. The protein is Phage shock protein G (pspG) of Escherichia coli (strain K12).